Reading from the N-terminus, the 284-residue chain is Nucleotide-binding protein Pput_0988 (284 aa).

Gly-8 to Ser-15 is a binding site for ATP. Residue Asp-60 to Asn-63 coordinates GTP.

This sequence belongs to the RapZ-like family.

Functionally, displays ATPase and GTPase activities. In Pseudomonas putida (strain ATCC 700007 / DSM 6899 / JCM 31910 / BCRC 17059 / LMG 24140 / F1), this protein is Nucleotide-binding protein Pput_0988.